The sequence spans 213 residues: Probable nicotinate-nucleotide adenylyltransferase (213 aa).

Belongs to the NadD family.

The enzyme catalyses nicotinate beta-D-ribonucleotide + ATP + H(+) = deamido-NAD(+) + diphosphate. The protein operates within cofactor biosynthesis; NAD(+) biosynthesis; deamido-NAD(+) from nicotinate D-ribonucleotide: step 1/1. Functionally, catalyzes the reversible adenylation of nicotinate mononucleotide (NaMN) to nicotinic acid adenine dinucleotide (NaAD). The chain is Probable nicotinate-nucleotide adenylyltransferase from Escherichia coli O139:H28 (strain E24377A / ETEC).